We begin with the raw amino-acid sequence, 251 residues long: Mycofactocin precursor peptide peptidase (251 aa).

5 residues coordinate a divalent metal cation: E38, H40, D49, H128, and E167.

The protein belongs to the creatininase superfamily. As to quaternary structure, homooctamer. Fe(2+) is required as a cofactor. Requires Zn(2+) as cofactor.

It carries out the reaction [mycofactocin precursor peptide]-C-terminal glycyl-N-{5-[(4-hydroxyphenyl)methyl]-4,4-dimethyl-2-oxopyrrolidin-3-yl}acetamide + H2O = [mycofactocin precursor peptide]-C-terminal glycine + 3-amino-5-[(4-hydroxyphenyl)methyl]-4,4-dimethyl-2-pyrrolidin-2-one. In terms of biological role, peptidase involved in the biosynthesis of the enzyme cofactor mycofactocin (MFT). Catalyzes cleavage of the MftC-modified MftA peptide to liberate its final two residues, which consist of a cross-linked valine-decarboxylated tyrosine dipeptide (named 3-amino-5-[(4-hydroxyphenyl)methyl]-4,4-dimethyl-2-pyrrolidin-2-one or ADHP). The protein is Mycofactocin precursor peptide peptidase (mftE) of Mycobacterium tuberculosis (strain CDC 1551 / Oshkosh).